Here is a 115-residue protein sequence, read N- to C-terminus: NADH-ubiquinone oxidoreductase chain 3 (115 aa).

3 helical membrane passes run 3–23 (IMLTLLTNVTLASLLVLIAFW), 55–75 (FFLVAITFLLFDLEIALLLPL), and 86–106 (TMLTMALFLLILLAASLAYEW).

Belongs to the complex I subunit 3 family. In terms of assembly, core subunit of respiratory chain NADH dehydrogenase (Complex I) which is composed of 45 different subunits. Interacts with TMEM186. Interacts with TMEM242.

The protein localises to the mitochondrion inner membrane. It catalyses the reaction a ubiquinone + NADH + 5 H(+)(in) = a ubiquinol + NAD(+) + 4 H(+)(out). Its function is as follows. Core subunit of the mitochondrial membrane respiratory chain NADH dehydrogenase (Complex I) which catalyzes electron transfer from NADH through the respiratory chain, using ubiquinone as an electron acceptor. Essential for the catalytic activity of complex I. In Sus scrofa (Pig), this protein is NADH-ubiquinone oxidoreductase chain 3.